We begin with the raw amino-acid sequence, 427 residues long: 3-phosphoshikimate 1-carboxyvinyltransferase (427 aa).

3-phosphoshikimate-binding residues include Lys20, Ser21, and Arg25. Residue Lys20 coordinates phosphoenolpyruvate. Phosphoenolpyruvate-binding residues include Gly92 and Arg120. Residues Ser166, Gln168, Asp312, and Lys339 each coordinate 3-phosphoshikimate. Gln168 contacts phosphoenolpyruvate. The Proton acceptor role is filled by Asp312. Arg343 and Arg385 together coordinate phosphoenolpyruvate.

The protein belongs to the EPSP synthase family. In terms of assembly, monomer.

The protein resides in the cytoplasm. The enzyme catalyses 3-phosphoshikimate + phosphoenolpyruvate = 5-O-(1-carboxyvinyl)-3-phosphoshikimate + phosphate. The protein operates within metabolic intermediate biosynthesis; chorismate biosynthesis; chorismate from D-erythrose 4-phosphate and phosphoenolpyruvate: step 6/7. Catalyzes the transfer of the enolpyruvyl moiety of phosphoenolpyruvate (PEP) to the 5-hydroxyl of shikimate-3-phosphate (S3P) to produce enolpyruvyl shikimate-3-phosphate and inorganic phosphate. This is 3-phosphoshikimate 1-carboxyvinyltransferase from Streptococcus pneumoniae serotype 2 (strain D39 / NCTC 7466).